Reading from the N-terminus, the 96-residue chain is Large ribosomal subunit protein uL23 (96 aa).

It belongs to the universal ribosomal protein uL23 family. Part of the 50S ribosomal subunit. Contacts protein L29, and trigger factor when it is bound to the ribosome.

Its function is as follows. One of the early assembly proteins it binds 23S rRNA. One of the proteins that surrounds the polypeptide exit tunnel on the outside of the ribosome. Forms the main docking site for trigger factor binding to the ribosome. The polypeptide is Large ribosomal subunit protein uL23 (Finegoldia magna (strain ATCC 29328 / DSM 20472 / WAL 2508) (Peptostreptococcus magnus)).